Reading from the N-terminus, the 412-residue chain is COP9 signalosome complex subunit 4 (412 aa).

The 163-residue stretch at 216–378 (EAAQRYYELS…GILHFEDSNP (163 aa)) folds into the PCI domain.

The protein belongs to the CSN4 family. In terms of assembly, component of the CSN complex, probably composed of csn-1, csn-2, csn-3, csn-4, csn-5, csn-6 and csn-7. Within the complex it probably interacts directly with csn-2 and csn-4. In the complex, it probably interacts directly with csn-1, csn-2, csn-3 and csn-6. Interacts with itself.

It is found in the cytoplasm. The protein resides in the nucleus. Component of the COP9 signalosome complex (CSN), a complex involved in various cellular and developmental processes. The CSN complex is an essential regulator of the ubiquitin (Ubl) conjugation pathway by mediating the deneddylation of the cullin subunits of the SCF-type E3 ligase complexes, leading to decrease the Ubl ligase activity of SCF. The CSN complex plays an essential role in embryogenesis and oogenesis and is required to regulate microtubule stability in the early embryo. Mediates mei-3/katanin targeting for degradation at the meiosis to mitosis transition via deneddylation of cul-3. The polypeptide is COP9 signalosome complex subunit 4 (csn-4) (Caenorhabditis elegans).